Consider the following 219-residue polypeptide: Small ribosomal subunit protein uS2m (219 aa).

The protein belongs to the universal ribosomal protein uS2 family. As to quaternary structure, component of the mitochondrial ribosome small subunit.

The protein localises to the mitochondrion. This chain is Small ribosomal subunit protein uS2m (RPS2), found in Arabidopsis thaliana (Mouse-ear cress).